A 239-amino-acid polypeptide reads, in one-letter code: Cysteine-rich venom protein ophanin (239 aa).

The N-terminal stretch at 1 to 18 (MIAFTLLSLAAVLQQSFG) is a signal peptide. Positions 37–165 (VDLHNSLRRS…EYSYFYVCQY (129 aa)) constitute an SCP domain. 8 disulfide bridges follow: Cys74–Cys152, Cys91–Cys166, Cys147–Cys163, Cys185–Cys192, Cys188–Cys197, Cys201–Cys234, Cys210–Cys228, and Cys219–Cys232. In terms of domain architecture, ShKT spans 201-234 (CTLYNEYTNCDSLVKQSSCQDEWIKSKCPASCFC).

In terms of tissue distribution, expressed by the venom gland.

The protein localises to the secreted. Its function is as follows. Weakly blocks contraction of smooth muscle elicited by high potassium-induced depolarization, but does not block caffeine-stimulated contraction. May target voltage-gated calcium channels on smooth muscle. In Ophiophagus hannah (King cobra), this protein is Cysteine-rich venom protein ophanin.